The primary structure comprises 392 residues: Homoserine O-acetyltransferase (392 aa).

One can recognise an AB hydrolase-1 domain in the interval 52–356 (NVVVVLHALT…ICGHDGFLVE (305 aa)). Serine 157 (nucleophile) is an active-site residue. Arginine 227 is a substrate binding site. Catalysis depends on residues aspartate 320 and histidine 350. Aspartate 351 is a substrate binding site. The disordered stretch occupies residues 373-392 (SQSAGPGGAGPGSRKGTTRR).

The protein belongs to the AB hydrolase superfamily. MetX family. Homodimer.

The protein localises to the cytoplasm. It catalyses the reaction L-homoserine + acetyl-CoA = O-acetyl-L-homoserine + CoA. Its pathway is amino-acid biosynthesis; L-methionine biosynthesis via de novo pathway; O-acetyl-L-homoserine from L-homoserine: step 1/1. In terms of biological role, transfers an acetyl group from acetyl-CoA to L-homoserine, forming acetyl-L-homoserine. In Mycobacterium avium (strain 104), this protein is Homoserine O-acetyltransferase.